We begin with the raw amino-acid sequence, 463 residues long: Bifunctional protein HldE (463 aa).

The ribokinase stretch occupies residues 1–315; that stretch reads MKKILVIGDL…LILNQTHPKI (315 aa). 191–194 provides a ligand contact to ATP; sequence NRAE. Aspartate 260 is an active-site residue. A cytidylyltransferase region spans residues 334 to 463; that stretch reads FTNGCFDILH…IEKIKRTHND (130 aa).

This sequence in the N-terminal section; belongs to the carbohydrate kinase PfkB family. In the C-terminal section; belongs to the cytidylyltransferase family. Homodimer.

The enzyme catalyses D-glycero-beta-D-manno-heptose 7-phosphate + ATP = D-glycero-beta-D-manno-heptose 1,7-bisphosphate + ADP + H(+). It catalyses the reaction D-glycero-beta-D-manno-heptose 1-phosphate + ATP + H(+) = ADP-D-glycero-beta-D-manno-heptose + diphosphate. It functions in the pathway nucleotide-sugar biosynthesis; ADP-L-glycero-beta-D-manno-heptose biosynthesis; ADP-L-glycero-beta-D-manno-heptose from D-glycero-beta-D-manno-heptose 7-phosphate: step 1/4. The protein operates within nucleotide-sugar biosynthesis; ADP-L-glycero-beta-D-manno-heptose biosynthesis; ADP-L-glycero-beta-D-manno-heptose from D-glycero-beta-D-manno-heptose 7-phosphate: step 3/4. Its pathway is bacterial outer membrane biogenesis; LPS core biosynthesis. In terms of biological role, catalyzes the phosphorylation of D-glycero-D-manno-heptose 7-phosphate at the C-1 position to selectively form D-glycero-beta-D-manno-heptose-1,7-bisphosphate. Its function is as follows. Catalyzes the ADP transfer from ATP to D-glycero-beta-D-manno-heptose 1-phosphate, yielding ADP-D-glycero-beta-D-manno-heptose. The polypeptide is Bifunctional protein HldE (Helicobacter pylori (strain J99 / ATCC 700824) (Campylobacter pylori J99)).